A 144-amino-acid polypeptide reads, in one-letter code: Maximins 1/H12 (144 aa).

Positions 1 to 18 are cleaved as a signal peptide; it reads MNFKYIVAVSFLIASAYA. The propeptide occupies 19–43; that stretch reads RSEENDEQSLSQRDVLEEESLREIR. Asn70 is modified (asparagine amide). A propeptide spanning residues 74–123 is cleaved from the precursor; sequence TAEEHEVMKRLEVVMRDLDSLDYPEEASERETRDFNQEEIANLYTKKEKR. Position 143 is an isoleucine amide (Ile143).

It belongs to the bombinin family. In terms of tissue distribution, expressed by the skin glands.

It is found in the secreted. Maximin-1 shows antibacterial activity against both Gram-positive and Gram-negative bacteria. It also shows antimicrobial activity against the fungus C.albicans, but not against A.flavus nor P.uticale. It has little hemolytic activity. It possess a significant cytotoxicity against tumor cell lines. It does not possess a significant anti-HIV activity. It shows high spermicidal activity. In terms of biological role, maximin-H12 shows antimicrobial activity against bacteria and against the fungus C.albicans. Shows strong hemolytic activity. The sequence is that of Maximins 1/H12 from Bombina maxima (Giant fire-bellied toad).